A 671-amino-acid polypeptide reads, in one-letter code: Copper amine oxidase 1 (671 aa).

An N2 region spans residues 3–106; sequence PHPLAILSEE…QHRVVGKEHH (104 aa). The tract at residues 107-211 is N3; sequence ASLTLSEFDT…DRPATGGKGE (105 aa). 319–330 serves as a coordination point for substrate; that stretch reads AFDFGDGGGGNM. D321 (proton acceptor) is an active-site residue. An intrachain disulfide couples C340 to C366. 402-407 is a binding site for substrate; sequence LANYEY. Catalysis depends on Y405, which acts as the Schiff-base intermediate with substrate; via topaquinone. Y405 bears the 2',4',5'-topaquinone mark. Residues H455 and H457 each coordinate Cu cation. Residue D464 participates in Mn(2+) binding. An N-linked (GlcNAc...) asparagine glycan is attached at N471. A Mn(2+)-binding site is contributed by D606. H617 is a Cu cation binding site.

This sequence belongs to the copper/topaquinone oxidase family. Homodimer. Cu cation serves as cofactor. The cofactor is Zn(2+). It depends on L-topaquinone as a cofactor. Mn(2+) is required as a cofactor. Post-translationally, topaquinone (TPQ) is generated by copper-dependent autoxidation of a specific tyrosyl residue.

It carries out the reaction histamine + O2 + H2O = imidazole-4-acetaldehyde + H2O2 + NH4(+). The protein is Copper amine oxidase 1 (AO-I) of Aspergillus niger.